Reading from the N-terminus, the 427-residue chain is 3-phosphoshikimate 1-carboxyvinyltransferase (427 aa).

Positions 22, 23, and 27 each coordinate 3-phosphoshikimate. Position 22 (Lys22) interacts with phosphoenolpyruvate. Phosphoenolpyruvate-binding residues include Gly93 and Arg122. Positions 167, 169, 315, and 342 each coordinate 3-phosphoshikimate. Gln169 contacts phosphoenolpyruvate. The active-site Proton acceptor is Asp315. Phosphoenolpyruvate-binding residues include Arg346 and Arg387.

Belongs to the EPSP synthase family. Monomer.

It is found in the cytoplasm. The catalysed reaction is 3-phosphoshikimate + phosphoenolpyruvate = 5-O-(1-carboxyvinyl)-3-phosphoshikimate + phosphate. It participates in metabolic intermediate biosynthesis; chorismate biosynthesis; chorismate from D-erythrose 4-phosphate and phosphoenolpyruvate: step 6/7. In terms of biological role, catalyzes the transfer of the enolpyruvyl moiety of phosphoenolpyruvate (PEP) to the 5-hydroxyl of shikimate-3-phosphate (S3P) to produce enolpyruvyl shikimate-3-phosphate and inorganic phosphate. This is 3-phosphoshikimate 1-carboxyvinyltransferase from Thermus thermophilus (strain ATCC BAA-163 / DSM 7039 / HB27).